The chain runs to 556 residues: Cytochrome P450 monooxygenase polC (556 aa).

A helical transmembrane segment spans residues 17-37; the sequence is LCFAISLLCAVAIATFLHKLY. C479 serves as a coordination point for heme.

The protein belongs to the cytochrome P450 family. The cofactor is heme.

It is found in the membrane. The catalysed reaction is motiol + 3 reduced [NADPH--hemoprotein reductase] + 3 O2 = 4beta-carboxyl motiol + 3 oxidized [NADPH--hemoprotein reductase] + 4 H2O + 4 H(+). It functions in the pathway secondary metabolite biosynthesis; terpenoid biosynthesis. In terms of biological role, cytochrome P450 monooxygenase; part of the gene cluster that mediates the biosynthesis of antifungal fernane-type triterpenoid polytolypin. PolC uses motiol as a substrate and converts the methyl group at position C-4 to a carboxyl group. Within the pathway, the triterpene cyclase polA first catalyzes the cyclization of 2,3-oxidosqualene to motiol, polC converts the 4-alpha-methyl group of motiol to a carboxyl group, polB is responsible for appending a hydroxyl group at the 2-alpha position and polE is a dual functional P450, which can catalyze the formation of both the 1-beta-hydroxyl group and 10-beta-carboxyl group. This chain is Cytochrome P450 monooxygenase polC, found in Polytolypa hystricis (strain UAMH7299).